Here is an 802-residue protein sequence, read N- to C-terminus: Outer membrane usher protein PefC (802 aa).

Residues 1-24 (MSFHHRVFKLSALSLALFSHLSFA) form the signal peptide. A disulfide bond links Cys-782 and Cys-801.

Belongs to the fimbrial export usher family.

It localises to the cell outer membrane. Involved in the export and assembly of FimA fimbrial subunits across the outer membrane. The chain is Outer membrane usher protein PefC (pefC) from Salmonella typhimurium (strain LT2 / SGSC1412 / ATCC 700720).